Consider the following 92-residue polypeptide: C-C motif chemokine 3 (92 aa).

Positions 1 to 19 (MKVPGAALAVLLCTMSLCS) are cleaved as a signal peptide. 2 disulfides stabilise this stretch: C33-C57 and C34-C73.

It belongs to the intercrine beta (chemokine CC) family. Self-associates. Also heterodimer of MIP-1-alpha(4-69) and MIP-1-beta(3-69). Interacts with CCR1.

It localises to the secreted. In terms of biological role, monokine with inflammatory and chemokinetic properties. Binds to CCR1, CCR4 and CCR5. One of the major HIV-suppressive factors produced by CD8+ T-cells. Recombinant MIP-1-alpha induces a dose-dependent inhibition of different strains of HIV-1, HIV-2, and simian immunodeficiency virus (SIV). This is C-C motif chemokine 3 (CCL3) from Canis lupus familiaris (Dog).